The sequence spans 356 residues: NF-kappa-B inhibitor beta (356 aa).

Phosphoserine; by RPS6KA1 is present on residues Ser-19 and Ser-23. 3 ANK repeats span residues 57–86 (DGDT…GTEY), 93–122 (LGQT…GLCV), and 126–155 (RGHT…RRPR). The disordered stretch occupies residues 149-193 (PRPRRPREAPDTYLAQGPDRTPDTNHTPVALYPDSDLEKEEEESE). Ser-183 bears the Phosphoserine mark. The segment covering 183–193 (SDLEKEEEESE) has biased composition (acidic residues). ANK repeat units follow at residues 206–235 (EGHT…DLDK), 240–269 (CGRS…NPAA), and 273–302 (GGRT…PEPE). A disordered region spans residues 298–356 (APEPEGEDEKSGPCSSSSDSDSGDEGDEYDDIVVHSSRSQTRLPPTPASKPLPDDPRPV). 2 positions are modified to phosphoserine; by CK2: Ser-313 and Ser-315. Positions 318–328 (DSGDEGDEYDD) are enriched in acidic residues.

The protein belongs to the NF-kappa-B inhibitor family. As to quaternary structure, interacts with THRB (via ligand-binding domain). Interacts with RELA and REL. Interacts with COMMD1. Interacts with inhibitor kappa B-interacting Ras-like NKIRAS1 and NKIRAS2. In terms of processing, phosphorylated by RPS6KA1; followed by degradation. Interaction with NKIRAS1 and NKIRAS2 probably prevents phosphorylation. In terms of tissue distribution, expressed in all tissues examined.

It is found in the cytoplasm. The protein localises to the nucleus. Inhibits NF-kappa-B by complexing with and trapping it in the cytoplasm. However, the unphosphorylated form resynthesized after cell stimulation is able to bind NF-kappa-B allowing its transport to the nucleus and protecting it to further NFKBIA-dependent inactivation. Association with inhibitor kappa B-interacting NKIRAS1 and NKIRAS2 prevent its phosphorylation rendering it more resistant to degradation, explaining its slower degradation. This is NF-kappa-B inhibitor beta (NFKBIB) from Homo sapiens (Human).